We begin with the raw amino-acid sequence, 272 residues long: Dihydropteroate synthase (272 aa).

The region spanning 1-256 is the Pterin-binding domain; the sequence is MIKTKIMGIL…NVLLNTRLAQ (256 aa). Residue asparagine 11 coordinates Mg(2+). (7,8-dihydropterin-6-yl)methyl diphosphate-binding positions include threonine 51, aspartate 89, asparagine 108, aspartate 172, lysine 208, and 244 to 246; that span reads RVH.

It belongs to the DHPS family. Homodimer. Mg(2+) serves as cofactor.

It carries out the reaction (7,8-dihydropterin-6-yl)methyl diphosphate + 4-aminobenzoate = 7,8-dihydropteroate + diphosphate. The protein operates within cofactor biosynthesis; tetrahydrofolate biosynthesis; 7,8-dihydrofolate from 2-amino-4-hydroxy-6-hydroxymethyl-7,8-dihydropteridine diphosphate and 4-aminobenzoate: step 1/2. Catalyzes the condensation of para-aminobenzoate (pABA) with 6-hydroxymethyl-7,8-dihydropterin diphosphate (DHPt-PP) to form 7,8-dihydropteroate (H2Pte), the immediate precursor of folate derivatives. The polypeptide is Dihydropteroate synthase (folP) (Staphylococcus epidermidis (strain ATCC 12228 / FDA PCI 1200)).